The chain runs to 359 residues: Fructose-bisphosphate aldolase (359 aa).

A D-glyceraldehyde 3-phosphate-binding site is contributed by Ser50. Asp83 (proton donor) is an active-site residue. Zn(2+) is bound by residues His84, Asp105, Glu142, and His198. Residue Gly199 coordinates dihydroxyacetone phosphate. His232 contributes to the Zn(2+) binding site. Dihydroxyacetone phosphate-binding positions include 233–235 (GSS) and 275–278 (NIDT).

The protein belongs to the class II fructose-bisphosphate aldolase family. As to quaternary structure, homodimer. Zn(2+) serves as cofactor.

It catalyses the reaction beta-D-fructose 1,6-bisphosphate = D-glyceraldehyde 3-phosphate + dihydroxyacetone phosphate. It participates in carbohydrate biosynthesis; Calvin cycle. The protein operates within carbohydrate degradation; glycolysis; D-glyceraldehyde 3-phosphate and glycerone phosphate from D-glucose: step 4/4. Functionally, catalyzes the aldol condensation of dihydroxyacetone phosphate (DHAP or glycerone-phosphate) with glyceraldehyde 3-phosphate (G3P) to form fructose 1,6-bisphosphate (FBP) in gluconeogenesis and the reverse reaction in glycolysis. The protein is Fructose-bisphosphate aldolase (cbbA) of Sinorhizobium medicae (strain WSM419) (Ensifer medicae).